The chain runs to 303 residues: Protoheme IX farnesyltransferase (303 aa).

8 helical membrane-spanning segments follow: residues 25 to 45 (MGLV…AIVL), 54 to 74 (IPQI…ACAL), 104 to 124 (LLIL…ILNI), 125 to 145 (PSGV…SIWS), 151 to 171 (WNTV…WTAI), 179 to 199 (AIAL…ALAI), 228 to 248 (VWLI…PVFI), and 280 to 300 (FVYS…ISLI).

It belongs to the UbiA prenyltransferase family. Protoheme IX farnesyltransferase subfamily. Interacts with CtaA.

The protein localises to the cell membrane. It carries out the reaction heme b + (2E,6E)-farnesyl diphosphate + H2O = Fe(II)-heme o + diphosphate. It participates in porphyrin-containing compound metabolism; heme O biosynthesis; heme O from protoheme: step 1/1. Converts heme B (protoheme IX) to heme O by substitution of the vinyl group on carbon 2 of heme B porphyrin ring with a hydroxyethyl farnesyl side group. The chain is Protoheme IX farnesyltransferase from Staphylococcus carnosus (strain TM300).